A 290-amino-acid polypeptide reads, in one-letter code: N-acetylneuraminate lyase (290 aa).

Aceneuramate contacts are provided by Ser44 and Thr45. The active-site Proton donor is the Tyr133. Lys161 functions as the Schiff-base intermediate with substrate in the catalytic mechanism. The aceneuramate site is built by Thr163, Gly185, Asp187, Glu188, and Ser204.

It belongs to the DapA family. NanA subfamily. Homotetramer.

The protein resides in the cytoplasm. The enzyme catalyses aceneuramate = aldehydo-N-acetyl-D-mannosamine + pyruvate. Its pathway is amino-sugar metabolism; N-acetylneuraminate degradation; D-fructose 6-phosphate from N-acetylneuraminate: step 1/5. In terms of biological role, catalyzes the reversible aldol cleavage of N-acetylneuraminic acid (sialic acid; Neu5Ac) to form pyruvate and N-acetylmannosamine (ManNAc) via a Schiff base intermediate. This Fusobacterium nucleatum subsp. nucleatum (strain ATCC 25586 / DSM 15643 / BCRC 10681 / CIP 101130 / JCM 8532 / KCTC 2640 / LMG 13131 / VPI 4355) protein is N-acetylneuraminate lyase.